The chain runs to 513 residues: Noroxomaritidine synthase 1 (513 aa).

A helical transmembrane segment spans residues 18 to 34 (ILIAIACLVVFSLLRSA). Cys458 lines the heme pocket.

This sequence belongs to the cytochrome P450 family. It depends on heme as a cofactor. As to expression, mostly expressed in stems, and, to a lower extent, in bulbs, roots, leaves and flowers.

The protein resides in the membrane. It catalyses the reaction 4'-O-methylnorbelladine + reduced [NADPH--hemoprotein reductase] + O2 = (10bR,4aS)-noroxomaritidine + oxidized [NADPH--hemoprotein reductase] + 2 H2O + H(+). The catalysed reaction is 4'-O-methylnorbelladine + reduced [NADPH--hemoprotein reductase] + O2 = (10bS,4aR)-noroxomaritidine + oxidized [NADPH--hemoprotein reductase] + 2 H2O + H(+). The protein operates within alkaloid biosynthesis. Its function is as follows. Cytochrome P450 that catalyzes an intramolecular para-para' C-C phenol coupling of 4'-O-methylnorbelladine in alkaloids biosynthesis, including haemanthamine- and crinamine-type alkaloids, promising anticancer agents. Catalyzes the formation of (10bR,4aS)-noroxomaritidine and (10bS,4aR)-noroxomaritidine from 4'-O-methylnorbelladine. The protein is Noroxomaritidine synthase 1 of Narcissus pseudonarcissus (Daffodil).